The sequence spans 242 residues: Uridylate kinase (242 aa).

Lys15–Gly18 is a binding site for ATP. The interval Gly23 to Gly28 is involved in allosteric activation by GTP. Gly57 contacts UMP. ATP is bound by residues Gly58 and Arg62. Residues Asp77 and Thr138–Thr145 contribute to the UMP site. ATP-binding residues include Thr165, Tyr171, and Asp174.

The protein belongs to the UMP kinase family. In terms of assembly, homohexamer.

It is found in the cytoplasm. It carries out the reaction UMP + ATP = UDP + ADP. It functions in the pathway pyrimidine metabolism; CTP biosynthesis via de novo pathway; UDP from UMP (UMPK route): step 1/1. Allosterically activated by GTP. Inhibited by UTP. Its function is as follows. Catalyzes the reversible phosphorylation of UMP to UDP. In Photorhabdus laumondii subsp. laumondii (strain DSM 15139 / CIP 105565 / TT01) (Photorhabdus luminescens subsp. laumondii), this protein is Uridylate kinase.